Reading from the N-terminus, the 31-residue chain is Photosystem II reaction center protein T (31 aa).

A helical membrane pass occupies residues 3–23 (SFAYILILGLAIATLFFAIAF).

Belongs to the PsbT family. In terms of assembly, PSII is composed of 1 copy each of membrane proteins PsbA, PsbB, PsbC, PsbD, PsbE, PsbF, PsbH, PsbI, PsbJ, PsbK, PsbL, PsbM, PsbT, PsbX, PsbY, PsbZ, Psb30/Ycf12, peripheral proteins PsbO, CyanoQ (PsbQ), PsbU, PsbV and a large number of cofactors. It forms dimeric complexes.

The protein resides in the cellular thylakoid membrane. Its function is as follows. Found at the monomer-monomer interface of the photosystem II (PS II) dimer, plays a role in assembly and dimerization of PSII. PSII is a light-driven water plastoquinone oxidoreductase, using light energy to abstract electrons from H(2)O, generating a proton gradient subsequently used for ATP formation. In Synechococcus sp. (strain CC9311), this protein is Photosystem II reaction center protein T.